The primary structure comprises 120 residues: Large ribosomal subunit protein uL18 (120 aa).

Belongs to the universal ribosomal protein uL18 family. As to quaternary structure, part of the 50S ribosomal subunit; part of the 5S rRNA/L5/L18/L25 subcomplex. Contacts the 5S and 23S rRNAs.

Its function is as follows. This is one of the proteins that bind and probably mediate the attachment of the 5S RNA into the large ribosomal subunit, where it forms part of the central protuberance. The sequence is that of Large ribosomal subunit protein uL18 from Staphylococcus haemolyticus (strain JCSC1435).